The sequence spans 463 residues: Interferon-inducible GTPase 5 (463 aa).

One can recognise an IRG-type G domain in the interval 52–234; that stretch reads TRLEVGVTGE…PMLVTTWEHD (183 aa). GTP contacts are provided by residues 61-68, 86-90, 168-170, and 215-217; these read ESGAGKSS, TGVVE, KVD, and SNL. Serine 246 and serine 303 each carry phosphoserine. The disordered stretch occupies residues 409–438; it reads QGEVSLEAAGDNAVEKRSSGEGTSEEAPLS.

The protein belongs to the TRAFAC class dynamin-like GTPase superfamily. IRG family.

It is found in the cell projection. The protein localises to the cilium. Its subcellular location is the flagellum. It localises to the lipid droplet. It catalyses the reaction GTP + H2O = GDP + phosphate + H(+). In terms of biological role, required for sperm motility and therefore male fertility, via positive regulation of spermatozoa fibrous sheath formation. The chain is Interferon-inducible GTPase 5 (Irgc) from Rattus norvegicus (Rat).